A 206-amino-acid polypeptide reads, in one-letter code: Imidazoleglycerol-phosphate dehydratase (206 aa).

It belongs to the imidazoleglycerol-phosphate dehydratase family.

It is found in the cytoplasm. It carries out the reaction D-erythro-1-(imidazol-4-yl)glycerol 3-phosphate = 3-(imidazol-4-yl)-2-oxopropyl phosphate + H2O. Its pathway is amino-acid biosynthesis; L-histidine biosynthesis; L-histidine from 5-phospho-alpha-D-ribose 1-diphosphate: step 6/9. The protein is Imidazoleglycerol-phosphate dehydratase of Leptospira interrogans serogroup Icterohaemorrhagiae serovar copenhageni (strain Fiocruz L1-130).